The chain runs to 465 residues: Protein hedgehog (465 aa).

The N-palmitoyl cysteine moiety is linked to residue cysteine 79. Positions 143, 144, 149, 179, 180, 183, and 185 each coordinate Ca(2+). Residue glycine 251 is the site of Cholesterol glycine ester attachment.

It belongs to the hedgehog family. As to quaternary structure, interacts with shf. The C-terminal part of the hedgehog protein precursor displays an autoproteolysis activity that results in the cleavage of the full-length protein into two parts (N-product and C-product). In addition, the C-terminal part displays a cholesterol transferase activity that results by the covalent attachment of a cholesterol moiety to the C-terminal of the newly generated N-product. The N-product is the active species in both local and long-range signaling, whereas the C-product has no signaling activity. Post-translationally, cholesterylation is required for N-product targeting to lipid rafts and multimerization. In terms of processing, N-palmitoylation by Rasp of the hedgehog N-product, within the secretory pathway, is required for the embryonic and larval patterning activities of the hedgehog signal.

Its subcellular location is the nucleus. It is found in the cytoplasm. The protein resides in the cell membrane. It catalyses the reaction glycyl-L-cysteinyl-[protein] + cholesterol + H(+) = [protein]-C-terminal glycyl cholesterol ester + N-terminal L-cysteinyl-[protein]. In terms of biological role, the C-terminal part of the hedgehog protein precursor displays an autoproteolysis activity that results in the cleavage of the full-length protein into two parts (N-product and C-product). In addition, the C-terminal part displays a cholesterol transferase activity that results by the covalent attachment of a cholesterol moiety to the C-terminal of the newly generated N-product. Once cleaved, the C-product has no signaling activity and diffuses from the cell. Functionally, the dually lipidated hedgehog protein N-product is a morphogen which is essential for a variety of patterning events during development. Establishes the anterior-posterior axis of the embryonic segments and patterns the larval imaginal disks. Binds to the patched (ptc) receptor, which functions in association with smoothened (smo), to activate the transcription of target genes wingless (wg), decapentaplegic (dpp) and ptc. In the absence of hh, ptc represses the constitutive signaling activity of smo through fused (fu). Essential component of a signaling pathway which regulates the Duox-dependent gut immune response to bacterial uracil; required to activate Cad99C-dependent endosome formation, norpA-dependent Ca2+ mobilization and p38 MAPK, which are essential steps in the Duox-dependent production of reactive oxygen species (ROS) in response to intestinal bacterial infection. During photoreceptor differentiation, it up-regulates transcription of Ubr3, which in turn promotes the hh-signaling pathway by mediating the ubiquitination and degradation of cos. The polypeptide is Protein hedgehog (Drosophila erecta (Fruit fly)).